Consider the following 370-residue polypeptide: GDSL esterase/lipase At1g09390 (370 aa).

An N-terminal signal peptide occupies residues M1–A27. The Nucleophile role is filled by S44. 2 N-linked (GlcNAc...) asparagine glycosylation sites follow: N90 and N315. Catalysis depends on residues D336 and H339.

Belongs to the 'GDSL' lipolytic enzyme family.

Its subcellular location is the secreted. This chain is GDSL esterase/lipase At1g09390, found in Arabidopsis thaliana (Mouse-ear cress).